The chain runs to 208 residues: Methylthioribulose-1-phosphate dehydratase (208 aa).

Residues His101 and His103 each coordinate Zn(2+).

The protein belongs to the aldolase class II family. MtnB subfamily. Zn(2+) serves as cofactor.

It catalyses the reaction 5-(methylsulfanyl)-D-ribulose 1-phosphate = 5-methylsulfanyl-2,3-dioxopentyl phosphate + H2O. Its pathway is amino-acid biosynthesis; L-methionine biosynthesis via salvage pathway; L-methionine from S-methyl-5-thio-alpha-D-ribose 1-phosphate: step 2/6. In terms of biological role, catalyzes the dehydration of methylthioribulose-1-phosphate (MTRu-1-P) into 2,3-diketo-5-methylthiopentyl-1-phosphate (DK-MTP-1-P). This is Methylthioribulose-1-phosphate dehydratase from Gluconobacter oxydans (strain 621H) (Gluconobacter suboxydans).